The primary structure comprises 885 residues: Leucine--tRNA ligase (885 aa).

The 'HIGH' region motif lies at 43-53 (PYTSGQLHMGH). The 'KMSKS' region motif lies at 571 to 575 (KMSKS). Residue Lys574 coordinates ATP. The interval 866–885 (SVANKAEPGRPAIHVDEADD) is disordered.

This sequence belongs to the class-I aminoacyl-tRNA synthetase family.

The protein localises to the cytoplasm. It carries out the reaction tRNA(Leu) + L-leucine + ATP = L-leucyl-tRNA(Leu) + AMP + diphosphate. This is Leucine--tRNA ligase from Halobacterium salinarum (strain ATCC 700922 / JCM 11081 / NRC-1) (Halobacterium halobium).